The chain runs to 100 residues: Large ribosomal subunit protein uL23 (100 aa).

Belongs to the universal ribosomal protein uL23 family. Part of the 50S ribosomal subunit. Contacts protein L29, and trigger factor when it is bound to the ribosome.

Its function is as follows. One of the early assembly proteins it binds 23S rRNA. One of the proteins that surrounds the polypeptide exit tunnel on the outside of the ribosome. Forms the main docking site for trigger factor binding to the ribosome. The chain is Large ribosomal subunit protein uL23 from Parasynechococcus marenigrum (strain WH8102).